A 678-amino-acid polypeptide reads, in one-letter code: Macrolide export ATP-binding/permease protein MacB 1 (678 aa).

An ABC transporter domain is found at 11-249 (LRLENVSREF…PKMVDIPSVI (239 aa)). Residue 47–54 (GTSGSGKS) participates in ATP binding. Helical transmembrane passes span 303 to 323 (ALTMLGIIIGIASVVSVVALG), 558 to 578 (IAVISLIVGGIGVMNIMLVSV), 608 to 628 (LVCLLGGSLGVALSLGIGLLF), and 641 to 661 (AASIITAFVCSSLIGVIFGFF).

This sequence belongs to the ABC transporter superfamily. Macrolide exporter (TC 3.A.1.122) family. In terms of assembly, homodimer. Part of the tripartite efflux system MacAB-TolC, which is composed of an inner membrane transporter, MacB, a periplasmic membrane fusion protein, MacA, and an outer membrane component, TolC. The complex forms a large protein conduit and can translocate molecules across both the inner and outer membranes. Interacts with MacA.

It localises to the cell inner membrane. Functionally, part of the tripartite efflux system MacAB-TolC. MacB is a non-canonical ABC transporter that contains transmembrane domains (TMD), which form a pore in the inner membrane, and an ATP-binding domain (NBD), which is responsible for energy generation. Confers resistance against macrolides. The chain is Macrolide export ATP-binding/permease protein MacB 1 from Yersinia pestis bv. Antiqua (strain Nepal516).